Here is a 259-residue protein sequence, read N- to C-terminus: Adenosylcobinamide-GDP ribazoletransferase (259 aa).

The next 6 helical transmembrane spans lie at 37-57, 58-78, 118-138, 143-163, 195-215, and 237-257; these read ASRYFGLVGTLIGVLSALVYS, VMLHWVSPSIAIIFAMIASVL, ALALVLCLLLKWQLLSELALF, VSLALILGHTLSRVVAASFIF, AAISLLLISFMQALVLILGLL, and LGATQQIAEVVCYLLLLIVGA.

It belongs to the CobS family. Mg(2+) is required as a cofactor.

It is found in the cell inner membrane. It carries out the reaction alpha-ribazole + adenosylcob(III)inamide-GDP = adenosylcob(III)alamin + GMP + H(+). It catalyses the reaction alpha-ribazole 5'-phosphate + adenosylcob(III)inamide-GDP = adenosylcob(III)alamin 5'-phosphate + GMP + H(+). It participates in cofactor biosynthesis; adenosylcobalamin biosynthesis; adenosylcobalamin from cob(II)yrinate a,c-diamide: step 7/7. In terms of biological role, joins adenosylcobinamide-GDP and alpha-ribazole to generate adenosylcobalamin (Ado-cobalamin). Also synthesizes adenosylcobalamin 5'-phosphate from adenosylcobinamide-GDP and alpha-ribazole 5'-phosphate. The chain is Adenosylcobinamide-GDP ribazoletransferase from Shewanella piezotolerans (strain WP3 / JCM 13877).